Consider the following 457-residue polypeptide: MLNVVILAAGLGKRMQSDLPKVLHTLAGRPMLDHVIGSARQLQPARIIVVVGHGADRVKAAFEGLPGLQFALQQPQHGTGHAVQQAVPQLLEGDGEDDVTLVLYGDVPLVQPATLQNLLQARGRGVAVLTEVLADSTGYGRIVRDAQGQVCRIVEHKDASEAERAIKEVNTGILAAPTARLKDWLGRITNDNAQGEYYLTDVIGLAVGDGVPVGAAQPGASWETLGVNSRVQQAQLERAWQSELARRQLEAGVTLADPARFDVRGTLSCGRDVFIDVGCVFEGTVTLGDGVRVGPHCVLRDVAVQAGARIEAYSHLQQAKVGQEAVVGPYARLRPGADLGERSHVGNFVEIKNSVLQADSKANHLAYIGDADIGARVNVGAGTITCNYDGVNKHRTVIEDDAFIGSDTQLVAPVRVGKGATLGAGTTLTKDAPAGQLTISRARQSTIEGWKRPVKKS.

The tract at residues 1–230 (MLNVVILAAG…SWETLGVNSR (230 aa)) is pyrophosphorylase. Residues 7–10 (LAAG), lysine 21, glutamine 73, 78–79 (GT), 104–106 (YGD), glycine 140, glutamate 155, asparagine 170, and asparagine 228 contribute to the UDP-N-acetyl-alpha-D-glucosamine site. Aspartate 106 provides a ligand contact to Mg(2+). Position 228 (asparagine 228) interacts with Mg(2+). The segment at 231 to 251 (VQQAQLERAWQSELARRQLEA) is linker. The tract at residues 252 to 457 (GVTLADPARF…EGWKRPVKKS (206 aa)) is N-acetyltransferase. Residues arginine 334 and lysine 352 each coordinate UDP-N-acetyl-alpha-D-glucosamine. Catalysis depends on histidine 364, which acts as the Proton acceptor. UDP-N-acetyl-alpha-D-glucosamine-binding residues include tyrosine 367 and asparagine 378. Residues alanine 381, 387-388 (NY), serine 406, alanine 424, and arginine 441 each bind acetyl-CoA.

This sequence in the N-terminal section; belongs to the N-acetylglucosamine-1-phosphate uridyltransferase family. It in the C-terminal section; belongs to the transferase hexapeptide repeat family. As to quaternary structure, homotrimer. Requires Mg(2+) as cofactor.

The protein resides in the cytoplasm. It catalyses the reaction alpha-D-glucosamine 1-phosphate + acetyl-CoA = N-acetyl-alpha-D-glucosamine 1-phosphate + CoA + H(+). It carries out the reaction N-acetyl-alpha-D-glucosamine 1-phosphate + UTP + H(+) = UDP-N-acetyl-alpha-D-glucosamine + diphosphate. Its pathway is nucleotide-sugar biosynthesis; UDP-N-acetyl-alpha-D-glucosamine biosynthesis; N-acetyl-alpha-D-glucosamine 1-phosphate from alpha-D-glucosamine 6-phosphate (route II): step 2/2. The protein operates within nucleotide-sugar biosynthesis; UDP-N-acetyl-alpha-D-glucosamine biosynthesis; UDP-N-acetyl-alpha-D-glucosamine from N-acetyl-alpha-D-glucosamine 1-phosphate: step 1/1. It participates in bacterial outer membrane biogenesis; LPS lipid A biosynthesis. Catalyzes the last two sequential reactions in the de novo biosynthetic pathway for UDP-N-acetylglucosamine (UDP-GlcNAc). The C-terminal domain catalyzes the transfer of acetyl group from acetyl coenzyme A to glucosamine-1-phosphate (GlcN-1-P) to produce N-acetylglucosamine-1-phosphate (GlcNAc-1-P), which is converted into UDP-GlcNAc by the transfer of uridine 5-monophosphate (from uridine 5-triphosphate), a reaction catalyzed by the N-terminal domain. The chain is Bifunctional protein GlmU from Bordetella bronchiseptica (strain ATCC BAA-588 / NCTC 13252 / RB50) (Alcaligenes bronchisepticus).